The primary structure comprises 359 residues: Membrane-bound lytic murein transglycosylase C (359 aa).

Positions Met-1–Ser-16 are cleaved as a signal peptide. Residue Cys-17 is the site of N-palmitoyl cysteine attachment. The S-diacylglycerol cysteine moiety is linked to residue Cys-17.

The protein belongs to the transglycosylase Slt family.

Its subcellular location is the cell outer membrane. It catalyses the reaction Exolytic cleavage of the (1-&gt;4)-beta-glycosidic linkage between N-acetylmuramic acid (MurNAc) and N-acetylglucosamine (GlcNAc) residues in peptidoglycan, from either the reducing or the non-reducing ends of the peptidoglycan chains, with concomitant formation of a 1,6-anhydrobond in the MurNAc residue.. Murein-degrading enzyme. May play a role in recycling of muropeptides during cell elongation and/or cell division. This is Membrane-bound lytic murein transglycosylase C from Escherichia coli (strain SMS-3-5 / SECEC).